We begin with the raw amino-acid sequence, 583 residues long: Phosphoglucomutase, cytoplasmic 2 (583 aa).

Alpha-D-glucose 1,6-bisphosphate is bound by residues Arg25 and Ser124. Residue Ser124 is the Phosphoserine intermediate of the active site. Mg(2+) is bound by residues Ser124, Asp300, Asp302, and Asp304. Ser124 is subject to Phosphoserine. Alpha-D-glucose 1,6-bisphosphate-binding residues include Asp304, Arg305, Thr368, Glu387, Ser389, and Lys400.

It belongs to the phosphohexose mutase family. Monomer. Mg(2+) is required as a cofactor.

Its subcellular location is the cytoplasm. The catalysed reaction is alpha-D-glucose 1-phosphate = alpha-D-glucose 6-phosphate. It catalyses the reaction O-phospho-L-seryl-[protein] + alpha-D-glucose 1-phosphate = alpha-D-glucose 1,6-bisphosphate + L-seryl-[protein]. It carries out the reaction alpha-D-glucose 1,6-bisphosphate + L-seryl-[protein] = O-phospho-L-seryl-[protein] + alpha-D-glucose 6-phosphate. Its function is as follows. Catalyzes the reversible isomerization of alpha-D-glucose 1-phosphate to alpha-D-glucose 6-phosphate. The mechanism proceeds via the intermediate compound alpha-D-glucose 1,6-bisphosphate. This enzyme participates in both the breakdown and synthesis of glucose. The sequence is that of Phosphoglucomutase, cytoplasmic 2 from Zea mays (Maize).